The chain runs to 1345 residues: Protein dispatched homolog 2 (1345 aa).

Residues 1–28 (MAPEASPERSCSLHTCPLEDPTGAPVPP) are disordered. The helical transmembrane segment at 125–145 (VAVIVGCLAFIFLCTLAGLLG) threads the bilayer. N-linked (GlcNAc...) asparagine glycans are attached at residues Asn-304 and Asn-420. The 170-residue stretch at 429–598 (LGLKPRLLKY…LLWLPATVVL (170 aa)) folds into the SSD domain. 6 consecutive transmembrane segments (helical) span residues 440–460 (LAEDTMYPLIALVVIFFGMSL), 465–485 (LFITFMSLLGVLGSLMVAYFL), 497–517 (FVNLAALLLLSGVCVNYTLIF), 544–564 (FGYLLLVSGLTTSAAFYGSYL), 572–592 (CFALFMGTAVLVHMGLTLLWL), and 659–679 (YIWICWFAALAAGGAYIGGVS). N-linked (GlcNAc...) asparagine glycosylation is present at Asn-776. Transmembrane regions (helical) follow at residues 919–939 (PAVVLGLALALAFATLLLSTW), 945–965 (LFSVAAVAGTVLLTVGLLVLL), 974–994 (ALFLSASVGLSVDLTINYCIS), 1019–1039 (AMTTGVLFASGVIMLPSTILL), and 1043–1063 (LGIIVMMVKFLGCGFASFFFQ). Disordered stretches follow at residues 1251–1271 (VRVPDSVGTSPEVMNGTGHPI) and 1295–1345 (PNMP…GYSS). The segment covering 1297 to 1306 (MPNSHHSSLS) has biased composition (polar residues). Arg-1310 is modified (omega-N-methylarginine).

This sequence belongs to the dispatched family.

The protein localises to the membrane. In Mus musculus (Mouse), this protein is Protein dispatched homolog 2 (Disp2).